The sequence spans 250 residues: Electron transfer flavoprotein subunit beta (250 aa).

This sequence belongs to the ETF beta-subunit/FixA family. As to quaternary structure, heterodimer of an alpha and a beta subunit. Requires FAD as cofactor. AMP is required as a cofactor.

The protein localises to the mitochondrion matrix. The electron transfer flavoprotein serves as a specific electron acceptor for several dehydrogenases, including five acyl-CoA dehydrogenases, glutaryl-CoA and sarcosine dehydrogenase. It transfers the electrons to the main mitochondrial respiratory chain via ETF-ubiquinone oxidoreductase (ETF dehydrogenase). The protein is Electron transfer flavoprotein subunit beta (etfb) of Dictyostelium discoideum (Social amoeba).